A 1522-amino-acid polypeptide reads, in one-letter code: Lysine-specific demethylase 5B (1522 aa).

The JmjN domain occupies 10–51 (CPVFEPSWEEFADPFAFIHKIRPIAEQTGICKVRPPPDWQPP). In terms of domain architecture, ARID spans 75 to 165 (TRVKLNFLDQ…ILYPYNLFQS (91 aa)). A compositionally biased stretch (basic and acidic residues) spans 180-192 (DTKDKEYKPHDIP). Residues 180 to 229 (DTKDKEYKPHDIPQRQSVQPSESCPPARRAKRLRAEATNIKTESDSPEVR) form a disordered region. The PHD-type 1 zinc-finger motif lies at 284-334 (LYVCLLCGSGNDEDRLLLCDGCDDSYHTFCLIPPLHDVPKGDWRCPQCLAQ). Tyrosine 400 provides a ligand contact to 2-oxoglutarate. Positions 428 to 594 (EYLDSGWNLN…LGRQCIEHYR (167 aa)) constitute a JmjC domain. Positions 474 and 476 each coordinate Fe cation. 2-oxoglutarate-binding residues include serine 482, asparagine 484, and lysine 492. Residue histidine 562 coordinates Fe cation. Residues 667–719 (CYKCKTTCFMSAVYCPCKPGLLVCLYHVEDLCSCPTYQYKLGYRYTLEELYPM) form a C5HC2 zinc finger. The PHD-type 2 zinc-finger motif lies at 1151 to 1199 (LKVCVCQKEPAAPMIQCELCRGFFHTGCVSVPHALQGPRVWLCPQCRRS). Residues 1353-1365 (LQAEQKPSVGPSN) show a composition bias toward polar residues. 2 disordered regions span residues 1353 to 1373 (LQAE…CCRG) and 1400 to 1460 (ARVR…DSED). Basic residues predominate over residues 1400-1416 (ARVRKMRTPKKKKLKLS). Basic and acidic residues predominate over residues 1426–1442 (RMERERERLLEAQRSSE). Residues 1462-1516 (DAICPAVTCLQPEGEEVDWVQCDGSCNQWFHQVCVGISPEMAEKEDYICASCAGK) form a PHD-type 3 zinc finger.

Belongs to the JARID1 histone demethylase family. The cofactor is Fe(2+).

Its subcellular location is the nucleus. The catalysed reaction is N(6),N(6),N(6)-trimethyl-L-lysyl(4)-[histone H3] + 3 2-oxoglutarate + 3 O2 = L-lysyl(4)-[histone H3] + 3 formaldehyde + 3 succinate + 3 CO2. Histone demethylase that demethylates 'Lys-4' of histone H3, thereby playing a central role in histone code. Does not demethylate histone H3 'Lys-9' or H3 'Lys-27'. Demethylates trimethylated, dimethylated and monomethylated H3 'Lys-4'. Acts as a transcriptional corepressor. May repress the CLOCK-BMAL1 heterodimer-mediated transcriptional activation of the core clock component PER2. The polypeptide is Lysine-specific demethylase 5B (KDM5B) (Gallus gallus (Chicken)).